The chain runs to 394 residues: NAD(P)H-quinone oxidoreductase subunit H (394 aa).

It belongs to the complex I 49 kDa subunit family. As to quaternary structure, NDH-1 can be composed of about 15 different subunits; different subcomplexes with different compositions have been identified which probably have different functions.

The protein resides in the cellular thylakoid membrane. It catalyses the reaction a plastoquinone + NADH + (n+1) H(+)(in) = a plastoquinol + NAD(+) + n H(+)(out). The enzyme catalyses a plastoquinone + NADPH + (n+1) H(+)(in) = a plastoquinol + NADP(+) + n H(+)(out). In terms of biological role, NDH-1 shuttles electrons from an unknown electron donor, via FMN and iron-sulfur (Fe-S) centers, to quinones in the respiratory and/or the photosynthetic chain. The immediate electron acceptor for the enzyme in this species is believed to be plastoquinone. Couples the redox reaction to proton translocation, and thus conserves the redox energy in a proton gradient. Cyanobacterial NDH-1 also plays a role in inorganic carbon-concentration. The chain is NAD(P)H-quinone oxidoreductase subunit H from Nostoc sp. (strain PCC 7120 / SAG 25.82 / UTEX 2576).